The chain runs to 900 residues: DNA mismatch repair protein MutS (900 aa).

Residues 1-88 are disordered; sequence MPGPSDDPTE…PAWAHHSQVD (88 aa). The segment covering 56–68 has biased composition (basic and acidic residues); sequence APADHNAADHDSN. 714-721 is a binding site for ATP; that stretch reads GPNASGKS.

Belongs to the DNA mismatch repair MutS family.

In terms of biological role, this protein is involved in the repair of mismatches in DNA. It is possible that it carries out the mismatch recognition step. This protein has a weak ATPase activity. The polypeptide is DNA mismatch repair protein MutS (Parasynechococcus marenigrum (strain WH8102)).